The sequence spans 246 residues: Small ribosomal subunit protein uS3 (246 aa).

One can recognise a KH type-2 domain in the interval 23 to 94; it reads LNEFLTRELA…RIELYAEKVA (72 aa). The disordered stretch occupies residues 201 to 246; the sequence is GPKKPLPDNVSVVEPKEEKIYETPETEYKIPPPSKPLDDLSEAKVL. Basic and acidic residues-rich tracts occupy residues 214-228 and 236-246; these read EPKEEKIYETPETEY and PLDDLSEAKVL. Thr-223 and Thr-226 each carry phosphothreonine. Position 241 is a phosphoserine (Ser-241).

Belongs to the universal ribosomal protein uS3 family. Interacts with LTV1; the interaction is RNA-independent.

It localises to the cytoplasm. The protein resides in the nucleus. Has DNA repair activity directed towards the mutagenic lesions 8-oxoguanine and abasic sites in DNA. It can cleave DNA containing 8-oxoguanine residues efficiently. Also acts as an ap lyase, cleaving phosphodiester bonds via a beta,delta elimination reaction. This chain is Small ribosomal subunit protein uS3 (RpS3), found in Drosophila melanogaster (Fruit fly).